Reading from the N-terminus, the 1051-residue chain is Ubiquitin-activating enzyme E1 1 (1051 aa).

Tandem repeats lie at residues 56 to 194 (GRET…GSVF) and 453 to 605 (GSKL…QMVI). A 2 approximate repeats region spans residues 56–605 (GRETMKRLFG…GAKCNTQMVI (550 aa)). ATP is bound by residues alanine 472, aspartate 498, arginine 509, lysine 522, and 570 to 571 (DN). Cysteine 626 (glycyl thioester intermediate) is an active-site residue.

This sequence belongs to the ubiquitin-activating E1 family. In terms of assembly, monomer. Post-translationally, the N-terminus is blocked.

It catalyses the reaction ATP + ubiquitin + [E1 ubiquitin-activating enzyme]-L-cysteine = AMP + diphosphate + S-ubiquitinyl-[E1 ubiquitin-activating enzyme]-L-cysteine.. Its pathway is protein modification; protein ubiquitination. In terms of biological role, activates ubiquitin by first adenylating its C-terminal glycine residue with ATP, and thereafter linking this residue to the side chain of a cysteine residue in E1, yielding a ubiquitin-E1 thioester and free AMP. This is Ubiquitin-activating enzyme E1 1 from Triticum aestivum (Wheat).